Here is a 331-residue protein sequence, read N- to C-terminus: MDAAVQVQRKKASNGAQVRNHWNVEEAKALYDLPFADLMLQAQRAHRKNFDPNHVETASLLSIKTGGCPEDCGYCSQSAHYATGLKATRLMRCADVVATAQRAKDAGATRFCMAAAWRTPKDRDLDSVCDMVNAVKGLGMETCVTLGTLTPKHAARLAEAGLDFYNHNVDTSPEFYSKIITTRSLQDRIDTLAHVRDAGIKICCGGIIGMGERVEDRLGMLVLLANLPNYPESVPINLWNKIEGVPVEDTAEPPDPIALVRLLATARVMMPRSVVRLSAGRQYMTDELQALCFLAGANSIFVGDVLLTTNNPKVDRDADLLARLGITSGLA.

The region spanning 53-272 (NHVETASLLS…LATARVMMPR (220 aa)) is the Radical SAM core domain. Positions 68, 72, and 75 each coordinate [4Fe-4S] cluster. Residues C112, C143, C203, and R276 each contribute to the [2Fe-2S] cluster site.

It belongs to the radical SAM superfamily. Biotin synthase family. As to quaternary structure, homodimer. It depends on [4Fe-4S] cluster as a cofactor. Requires [2Fe-2S] cluster as cofactor.

The enzyme catalyses (4R,5S)-dethiobiotin + (sulfur carrier)-SH + 2 reduced [2Fe-2S]-[ferredoxin] + 2 S-adenosyl-L-methionine = (sulfur carrier)-H + biotin + 2 5'-deoxyadenosine + 2 L-methionine + 2 oxidized [2Fe-2S]-[ferredoxin]. It participates in cofactor biosynthesis; biotin biosynthesis; biotin from 7,8-diaminononanoate: step 2/2. Catalyzes the conversion of dethiobiotin (DTB) to biotin by the insertion of a sulfur atom into dethiobiotin via a radical-based mechanism. The protein is Biotin synthase of Bradyrhizobium diazoefficiens (strain JCM 10833 / BCRC 13528 / IAM 13628 / NBRC 14792 / USDA 110).